Here is a 407-residue protein sequence, read N- to C-terminus: MLLSVTSRPGISTFGYNRNNKKPYVSLAQQMAPPSPSNSTPNSSSGSNGNDQLSKTNLYIRGLQPGTTDQDLVKLCQPYGKIVSTKAILDKTTNKCKGYGFVDFDSPSAAQKAVTALKASGVQAQMAKQQEQDPTNLYISNLPLSMDEQELEGMLKPFGQVISTRILRDTSGTSRGVGFARMESTEKCEAIITHFNGKYIKTPPGVPAPSDPLLCKFADGGPKKRQNQGKFVQNGRAWPRNADMGVMALTYDPTTALQNGFYPAPYNITPNRMLAQSALSPYLSSPVSSYQRVTQTSPLQVPNPSWMHHHSYLMQPSGSVLTPGMDHPISLQPASMMGPLTQQLGHLSLSSTGTYMPTAAAMQGAYISQYTPVPSSSVSVEESSGQQNQVAVDAPSEHGVYSFQFNK.

The residue at position 1 (M1) is an N-acetylmethionine. The tract at residues 29–54 (QQMAPPSPSNSTPNSSSGSNGNDQLS) is disordered. A compositionally biased stretch (low complexity) spans 37 to 50 (SNSTPNSSSGSNGN). RRM domains are found at residues 56–129 (TNLY…MAKQ) and 135–220 (TNLY…FADG). S106 carries the phosphoserine modification. Residue T269 is modified to Phosphothreonine. Phosphoserine occurs at positions 280 and 285.

The protein resides in the nucleus. In Homo sapiens (Human), this protein is RNA-binding motif, single-stranded-interacting protein 2 (RBMS2).